Consider the following 823-residue polypeptide: Lon protease (823 aa).

A Lon N-terminal domain is found at 22–217 (LPLLPVRDVV…KVNEHLNKEH (196 aa)). 369 to 376 (GPPGVGKT) is an ATP binding site. The region spanning 605–786 (KNEVGIVTGL…DDVLAVALET (182 aa)) is the Lon proteolytic domain. Active-site residues include Ser692 and Lys735. Residues 788–823 (PPPPPASEGKPAATVKAPPRRGIAAPRKGAMAGAKS) form a disordered region.

This sequence belongs to the peptidase S16 family. Homohexamer. Organized in a ring with a central cavity.

It is found in the cytoplasm. It carries out the reaction Hydrolysis of proteins in presence of ATP.. In terms of biological role, ATP-dependent serine protease that mediates the selective degradation of mutant and abnormal proteins as well as certain short-lived regulatory proteins. Required for cellular homeostasis and for survival from DNA damage and developmental changes induced by stress. Degrades polypeptides processively to yield small peptide fragments that are 5 to 10 amino acids long. Binds to DNA in a double-stranded, site-specific manner. The chain is Lon protease from Geobacter metallireducens (strain ATCC 53774 / DSM 7210 / GS-15).